We begin with the raw amino-acid sequence, 474 residues long: Proline--tRNA ligase (474 aa).

It belongs to the class-II aminoacyl-tRNA synthetase family. ProS type 3 subfamily. As to quaternary structure, homodimer.

It is found in the cytoplasm. It carries out the reaction tRNA(Pro) + L-proline + ATP = L-prolyl-tRNA(Pro) + AMP + diphosphate. Functionally, catalyzes the attachment of proline to tRNA(Pro) in a two-step reaction: proline is first activated by ATP to form Pro-AMP and then transferred to the acceptor end of tRNA(Pro). The polypeptide is Proline--tRNA ligase (Onion yellows phytoplasma (strain OY-M)).